The sequence spans 900 residues: Translation initiation factor IF-2 (900 aa).

Disordered regions lie at residues 30-77 and 89-291; these read GEFV…SLDK and NGKA…YDSM. A compositionally biased stretch (low complexity) spans 89 to 112; that stretch reads NGKATAAPAKAADSGGAAIVSPTT. Pro residues predominate over residues 113–129; that stretch reads PAAPEPPTAVPPSPQAP. Positions 175–187 are enriched in low complexity; that stretch reads PGTARPGVPRPGA. Gly residues predominate over residues 215-271; the sequence is GRPGAPGAGRSDAGGGNYRGGGVGAAPGTGFRGRPGGGGGGRPGQRGGAAGAFGRPG. Residues 275–284 are compositionally biased toward basic residues; the sequence is RRGRKSKRQK. Residues 396 to 567 form the tr-type G domain; sequence VRPPVVTVMG…AVLLTADAAL (172 aa). Residues 405–412 form a G1 region; sequence GHVDHGKT. 405-412 contributes to the GTP binding site; sequence GHVDHGKT. The segment at 430–434 is G2; sequence GITQH. The tract at residues 455–458 is G3; the sequence is DTPG. GTP-binding positions include 455 to 459 and 509 to 512; these read DTPGH and NKID. The interval 509-512 is G4; that stretch reads NKID. The segment at 545–547 is G5; it reads SAK.

This sequence belongs to the TRAFAC class translation factor GTPase superfamily. Classic translation factor GTPase family. IF-2 subfamily.

It localises to the cytoplasm. One of the essential components for the initiation of protein synthesis. Protects formylmethionyl-tRNA from spontaneous hydrolysis and promotes its binding to the 30S ribosomal subunits. Also involved in the hydrolysis of GTP during the formation of the 70S ribosomal complex. This chain is Translation initiation factor IF-2, found in Mycobacterium bovis (strain BCG / Pasteur 1173P2).